Reading from the N-terminus, the 523-residue chain is Glycerate kinase (523 aa).

A Phosphoserine modification is found at S60. K200 carries the post-translational modification N6-acetyllysine.

It belongs to the glycerate kinase type-2 family.

Its subcellular location is the cytoplasm. It catalyses the reaction (R)-glycerate + ATP = (2R)-3-phosphoglycerate + ADP + H(+). In Rattus norvegicus (Rat), this protein is Glycerate kinase (Glyctk).